The primary structure comprises 262 residues: Phosphonates import ATP-binding protein PhnC 3 (262 aa).

Residues 3 to 245 (IQLECLSVTY…ELNRIYGNAE (243 aa)) form the ABC transporter domain. 36–43 (GASGSGKS) lines the ATP pocket.

It belongs to the ABC transporter superfamily. Phosphonates importer (TC 3.A.1.9.1) family. The complex is composed of two ATP-binding proteins (PhnC), two transmembrane proteins (PhnE) and a solute-binding protein (PhnD).

It is found in the cell inner membrane. The enzyme catalyses phosphonate(out) + ATP + H2O = phosphonate(in) + ADP + phosphate + H(+). Part of the ABC transporter complex PhnCDE involved in phosphonates import. Responsible for energy coupling to the transport system. This chain is Phosphonates import ATP-binding protein PhnC 3, found in Nostoc sp. (strain PCC 7120 / SAG 25.82 / UTEX 2576).